The chain runs to 372 residues: Queuine tRNA-ribosyltransferase (372 aa).

The active-site Proton acceptor is Asp92. Residues 92–96 (DSGGF), Asp146, Gln188, and Gly215 each bind substrate. Residues 246 to 252 (GIGTLRE) form an RNA binding region. Catalysis depends on Asp265, which acts as the Nucleophile. The tract at residues 270-274 (TRLGR) is RNA binding; important for wobble base 34 recognition. The Zn(2+) site is built by Cys303, Cys305, Cys308, and His334.

The protein belongs to the queuine tRNA-ribosyltransferase family. As to quaternary structure, homodimer. Within each dimer, one monomer is responsible for RNA recognition and catalysis, while the other monomer binds to the replacement base PreQ1. It depends on Zn(2+) as a cofactor.

It catalyses the reaction 7-aminomethyl-7-carbaguanine + guanosine(34) in tRNA = 7-aminomethyl-7-carbaguanosine(34) in tRNA + guanine. It participates in tRNA modification; tRNA-queuosine biosynthesis. Functionally, catalyzes the base-exchange of a guanine (G) residue with the queuine precursor 7-aminomethyl-7-deazaguanine (PreQ1) at position 34 (anticodon wobble position) in tRNAs with GU(N) anticodons (tRNA-Asp, -Asn, -His and -Tyr). Catalysis occurs through a double-displacement mechanism. The nucleophile active site attacks the C1' of nucleotide 34 to detach the guanine base from the RNA, forming a covalent enzyme-RNA intermediate. The proton acceptor active site deprotonates the incoming PreQ1, allowing a nucleophilic attack on the C1' of the ribose to form the product. After dissociation, two additional enzymatic reactions on the tRNA convert PreQ1 to queuine (Q), resulting in the hypermodified nucleoside queuosine (7-(((4,5-cis-dihydroxy-2-cyclopenten-1-yl)amino)methyl)-7-deazaguanosine). This Synechococcus sp. (strain CC9605) protein is Queuine tRNA-ribosyltransferase.